We begin with the raw amino-acid sequence, 594 residues long: UvrABC system protein C (594 aa).

A GIY-YIG domain is found at 13–99; that stretch reads HSSGVYQYFD…IKQLKPKYNI (87 aa). The UVR domain occupies 205–240; the sequence is DKLIKELELKMERLSNNLRFEEALIYRDRIAKIQKI.

This sequence belongs to the UvrC family. In terms of assembly, interacts with UvrB in an incision complex.

Its subcellular location is the cytoplasm. Functionally, the UvrABC repair system catalyzes the recognition and processing of DNA lesions. UvrC both incises the 5' and 3' sides of the lesion. The N-terminal half is responsible for the 3' incision and the C-terminal half is responsible for the 5' incision. The polypeptide is UvrABC system protein C (Helicobacter pylori (strain Shi470)).